The chain runs to 177 residues: ATP synthase subunit b (177 aa).

A helical transmembrane segment spans residues F35 to P55.

It belongs to the ATPase B chain family. F-type ATPases have 2 components, F(1) - the catalytic core - and F(0) - the membrane proton channel. F(1) has five subunits: alpha(3), beta(3), gamma(1), delta(1), epsilon(1). F(0) has three main subunits: a(1), b(2) and c(10-14). The alpha and beta chains form an alternating ring which encloses part of the gamma chain. F(1) is attached to F(0) by a central stalk formed by the gamma and epsilon chains, while a peripheral stalk is formed by the delta and b chains.

The protein localises to the cell membrane. F(1)F(0) ATP synthase produces ATP from ADP in the presence of a proton or sodium gradient. F-type ATPases consist of two structural domains, F(1) containing the extramembraneous catalytic core and F(0) containing the membrane proton channel, linked together by a central stalk and a peripheral stalk. During catalysis, ATP synthesis in the catalytic domain of F(1) is coupled via a rotary mechanism of the central stalk subunits to proton translocation. Its function is as follows. Component of the F(0) channel, it forms part of the peripheral stalk, linking F(1) to F(0). This Mycobacteroides abscessus (strain ATCC 19977 / DSM 44196 / CCUG 20993 / CIP 104536 / JCM 13569 / NCTC 13031 / TMC 1543 / L948) (Mycobacterium abscessus) protein is ATP synthase subunit b.